Here is an 812-residue protein sequence, read N- to C-terminus: Collagen-like protein 5 (812 aa).

2 N-linked (GlcNAc...) asparagine; by host glycosylation sites follow: Asn13 and Asn83. Collagen-like domains lie at 69-128, 143-502, and 506-565; these read GASG…KGDD, GEKG…KGDN, and GETG…KGEA. Residues 71–568 form a disordered region; sequence SGAQGVKGDP…PGIKGEAGTN (498 aa). Basic and acidic residues-rich tracts occupy residues 88 to 112, 121 to 435, 444 to 523, and 531 to 561; these read TKGEKGDKGDKGSKGDNGEKGEKGD, SKGD…ETGS, SKGD…KGIK, and VKGDKGSKGDKGDLGDTGIKGDKGEKGDPGI. Asn502 carries N-linked (GlcNAc...) asparagine; by host glycosylation. Asn637, Asn658, and Asn667 each carry an N-linked (GlcNAc...) asparagine; by host glycan. Residues 730-802 form a disordered region; the sequence is GQARTNGAST…VSASGGRGGD (73 aa). Residues 752–765 are compositionally biased toward gly residues; sequence FGGGGGGASGFAKG.

In terms of processing, may be hydroxylated on lysine by the viral-encoded procollagen-lysine,2-oxoglutarate 5-dioxygenase.

The protein resides in the virion. May participate in the formation of a layer of cross-linked glycosylated fibrils at the viral surface thus giving it a hairy-like appearance. This chain is Collagen-like protein 5, found in Acanthamoeba polyphaga (Amoeba).